We begin with the raw amino-acid sequence, 507 residues long: Fatty acid resistance protein FarB (507 aa).

14 consecutive transmembrane segments (helical) span residues 8-28 (GAALAWVTLSLGLAVFMEVLD), 52-72 (WVITSFSVANAVSVPLTGFLA), 78-98 (VKLFTAAAAGFVIASWLCGIA), 109-129 (ILQGFIAGPLIPLSQSLLMAS), 136-156 (MLALALWAMTVVVAPVLGPIL), 164-184 (WHWGWIFFINIPIGIISAWIT), 199-219 (PTDYVGLTLMMVGIGALQMML), 233-253 (IITLGITALVCLSYFIVWELG), 274-294 (IATSLGFMVYMGTLTLLPLVL), 303-323 (AWAGLAAAPVGILPVFLSPLI), 334-354 (LLVTASFLTFAFTFYWRTDFY), 363-383 (IWPQFWQGVGVAMFFLPLTTI), 399-419 (LSNFLRVLMGGVGVSVVSTLW), and 478-498 (IFLAGSILFIVLIPIVWLAKP).

It belongs to the major facilitator superfamily. EmrB family. In terms of assembly, probably part of a tripartite efflux system FarAB-MtrE, which is composed of an inner membrane transporter, FarB, a periplasmic membrane fusion protein, FarA, and an outer membrane component, MtrE.

It localises to the cell inner membrane. In terms of biological role, mediates resistance to long-chained antibacterial fatty acids (FAs). Function is dependent on the MtrE outer membrane protein. In Neisseria gonorrhoeae, this protein is Fatty acid resistance protein FarB.